A 136-amino-acid chain; its full sequence is uncharacterized protein (136 aa).

The segment at 46–136 is disordered; sequence SAGRHLGGPG…LDGLEDAEKR (91 aa). The segment covering 99 to 108 has biased composition (gly residues); it reads GPGDAGGAGG. Positions 123-136 are enriched in acidic residues; that stretch reads IAELLDGLEDAEKR.

This is an uncharacterized protein from Homo sapiens (Human).